Consider the following 226-residue polypeptide: uncharacterized protein (226 aa).

The 152-residue stretch at 75–226 folds into the N-acetyltransferase domain; it reads YTIRNVTKDD…KGWLRMVKRI (152 aa).

It belongs to the acetyltransferase family.

This is an uncharacterized protein from Methanocaldococcus jannaschii (strain ATCC 43067 / DSM 2661 / JAL-1 / JCM 10045 / NBRC 100440) (Methanococcus jannaschii).